A 227-amino-acid polypeptide reads, in one-letter code: uncharacterized protein (227 aa).

To ORF5 in pFZ1.

This is an uncharacterized protein from Methanothermobacter thermautotrophicus (Methanobacterium thermoformicicum).